Consider the following 487-residue polypeptide: Malonate-semialdehyde dehydrogenase 2 (487 aa).

Phe-154, Lys-178, Glu-181, Arg-182, and Ser-231 together coordinate NAD(+). Cys-286 serves as the catalytic Nucleophile. Residue Glu-386 participates in NAD(+) binding.

This sequence belongs to the aldehyde dehydrogenase family. IolA subfamily. As to quaternary structure, homotetramer.

The enzyme catalyses 3-oxopropanoate + NAD(+) + CoA + H2O = hydrogencarbonate + acetyl-CoA + NADH + H(+). It carries out the reaction 2-methyl-3-oxopropanoate + NAD(+) + CoA + H2O = propanoyl-CoA + hydrogencarbonate + NADH + H(+). Its pathway is polyol metabolism; myo-inositol degradation into acetyl-CoA; acetyl-CoA from myo-inositol: step 7/7. In terms of biological role, catalyzes the oxidation of malonate semialdehyde (MSA) and methylmalonate semialdehyde (MMSA) into acetyl-CoA and propanoyl-CoA, respectively. Is involved in a myo-inositol catabolic pathway. Bicarbonate, and not CO2, is the end-product of the enzymatic reaction. This Bacillus thuringiensis subsp. konkukian (strain 97-27) protein is Malonate-semialdehyde dehydrogenase 2.